A 192-amino-acid chain; its full sequence is Xanthine phosphoribosyltransferase (192 aa).

Leucine 20 and asparagine 27 together coordinate xanthine. Residue 128–132 (AQGEA) participates in 5-phospho-alpha-D-ribose 1-diphosphate binding. Lysine 156 contributes to the xanthine binding site.

The protein belongs to the purine/pyrimidine phosphoribosyltransferase family. Xpt subfamily. In terms of assembly, homodimer.

It localises to the cytoplasm. It carries out the reaction XMP + diphosphate = xanthine + 5-phospho-alpha-D-ribose 1-diphosphate. The protein operates within purine metabolism; XMP biosynthesis via salvage pathway; XMP from xanthine: step 1/1. Converts the preformed base xanthine, a product of nucleic acid breakdown, to xanthosine 5'-monophosphate (XMP), so it can be reused for RNA or DNA synthesis. This Lactobacillus helveticus (strain DPC 4571) protein is Xanthine phosphoribosyltransferase.